Here is a 436-residue protein sequence, read N- to C-terminus: Adenylosuccinate synthetase (436 aa).

GTP contacts are provided by residues 22–28 (GDEGKGK) and 50–52 (GHE). Residue Asp-23 is the Proton acceptor of the active site. Residues Asp-23 and Gly-50 each coordinate Mg(2+). Residues 23 to 26 (DEGK), 48 to 51 (NAGH), Thr-141, Arg-155, Asn-231, Thr-246, and Arg-310 contribute to the IMP site. His-51 serves as the catalytic Proton donor. 306–312 (VSTARVR) lines the substrate pocket. GTP contacts are provided by residues Arg-312, 338 to 340 (KMD), and 424 to 426 (GVG).

The protein belongs to the adenylosuccinate synthetase family. In terms of assembly, homodimer. Mg(2+) serves as cofactor.

The protein resides in the cytoplasm. It carries out the reaction IMP + L-aspartate + GTP = N(6)-(1,2-dicarboxyethyl)-AMP + GDP + phosphate + 2 H(+). It functions in the pathway purine metabolism; AMP biosynthesis via de novo pathway; AMP from IMP: step 1/2. In terms of biological role, plays an important role in the salvage pathway for purine nucleotide biosynthesis. Catalyzes the first committed step in the biosynthesis of AMP from IMP. This Babesia bovis protein is Adenylosuccinate synthetase.